The chain runs to 747 residues: E3 UFM1-protein ligase 1 homolog (747 aa).

The disordered stretch occupies residues 403 to 468; the sequence is EKKKQCGSKA…GTVQVNSEEL (66 aa). The span at 429–438 shows a compositional bias: basic residues; that stretch reads GGKGGKKGGK. Positions 439-449 are enriched in gly residues; it reads GGKNGGGGGKG. The segment covering 450–465 has biased composition (polar residues); the sequence is ATSSVPTGSGTVQVNS.

This sequence belongs to the UFL1 family.

E3 UFM1-protein ligase that mediates ufmylation of target proteins. This Caenorhabditis briggsae protein is E3 UFM1-protein ligase 1 homolog (ufl-1).